A 95-amino-acid polypeptide reads, in one-letter code: Aspartyl/glutamyl-tRNA(Asn/Gln) amidotransferase subunit C (95 aa).

This sequence belongs to the GatC family. Heterotrimer of A, B and C subunits.

It catalyses the reaction L-glutamyl-tRNA(Gln) + L-glutamine + ATP + H2O = L-glutaminyl-tRNA(Gln) + L-glutamate + ADP + phosphate + H(+). The catalysed reaction is L-aspartyl-tRNA(Asn) + L-glutamine + ATP + H2O = L-asparaginyl-tRNA(Asn) + L-glutamate + ADP + phosphate + 2 H(+). Functionally, allows the formation of correctly charged Asn-tRNA(Asn) or Gln-tRNA(Gln) through the transamidation of misacylated Asp-tRNA(Asn) or Glu-tRNA(Gln) in organisms which lack either or both of asparaginyl-tRNA or glutaminyl-tRNA synthetases. The reaction takes place in the presence of glutamine and ATP through an activated phospho-Asp-tRNA(Asn) or phospho-Glu-tRNA(Gln). This is Aspartyl/glutamyl-tRNA(Asn/Gln) amidotransferase subunit C from Trichlorobacter lovleyi (strain ATCC BAA-1151 / DSM 17278 / SZ) (Geobacter lovleyi).